We begin with the raw amino-acid sequence, 79 residues long: uncharacterized protein (79 aa).

This is an uncharacterized protein from Saccharomyces cerevisiae (strain ATCC 204508 / S288c) (Baker's yeast).